Consider the following 86-residue polypeptide: Large ribosomal subunit protein bL27 (86 aa).

This sequence belongs to the bacterial ribosomal protein bL27 family.

The sequence is that of Large ribosomal subunit protein bL27 from Xanthomonas axonopodis pv. citri (strain 306).